The sequence spans 20 residues: Acidic phospholipase A2 CbIbeta (20 aa).

The protein belongs to the phospholipase A2 family. Group II subfamily. D49 sub-subfamily. As to quaternary structure, heterodimer of an acidic subunit (CbIalpha or CbIbeta) and a basic subunit (CbII). The acidic subunit (CbI) is non-toxic, and increases the toxicity of the basic subunit (CbII). Requires Ca(2+) as cofactor. Contains 7 disulfide bonds. In terms of tissue distribution, expressed by the venom gland.

The protein localises to the secreted. It carries out the reaction a 1,2-diacyl-sn-glycero-3-phosphocholine + H2O = a 1-acyl-sn-glycero-3-phosphocholine + a fatty acid + H(+). Functionally, heterodimer: presynaptic neurotoxin. Monomer: Snake venom phospholipase A2 (PLA2) is inactive towards micellar phosphatidylcholine but is weakly active towards non-micellar dithiolecithin. PLA2 catalyzes the calcium-dependent hydrolysis of the 2-acyl groups in 3-sn-phosphoglycerides. The polypeptide is Acidic phospholipase A2 CbIbeta (Pseudocerastes fieldi (Field's horned viper)).